The chain runs to 653 residues: DNA-directed RNA polymerase III subunit RPC-3 (653 aa).

3 disordered regions span residues 141-186, 280-309, and 422-442; these read INGV…DSDP, DSSA…DFSD, and IKED…KRRG. The span at 159–170 shows a compositional bias: basic and acidic residues; it reads AENHTDHAHDYQ. 2 stretches are compositionally biased toward acidic residues: residues 293 to 309 and 424 to 433; these read PLED…DFSD and EDEDDEDEEG. The segment at 580-601 is leucine-zipper; the sequence is TYKSMSRCLQRIRVEREKLKFL.

It belongs to the RNA polymerase beta chain family. As to quaternary structure, component of the RNA polymerase III (Pol III) complex consisting of 17 subunits.

The protein resides in the nucleus. Its function is as follows. DNA-dependent RNA polymerase catalyzes the transcription of DNA into RNA using the four ribonucleoside triphosphates as substrates. Specific core component of RNA polymerase III which synthesizes small RNAs, such as 5S rRNA and tRNAs. The sequence is that of DNA-directed RNA polymerase III subunit RPC-3 (RPC-82) from Coccidioides immitis (strain RS) (Valley fever fungus).